The sequence spans 378 residues: Cytochrome b (378 aa).

4 consecutive transmembrane segments (helical) span residues 34-54, 78-99, 114-134, and 179-199; these read FGSLLGLCLIIQILTGLFLAM, WLLRTLHANGASFFFICIYLHV, WLIGVIILFLVMGTAFMGYVL, and FFTFHFILPFIVLAMTMIHLL. Residues histidine 84 and histidine 98 each contribute to the heme b site. Heme b is bound by residues histidine 183 and histidine 197. An a ubiquinone-binding site is contributed by histidine 202. The next 4 helical transmembrane spans lie at 227–247, 289–309, 321–341, and 348–368; these read FKDIVGFIVMIFILISLVLIS, LGGVIALVLSIAILMILPFYN, INQVMFWSMLVTVILLTWIGA, and YVLIGQILTVVYFLYYLVNPL.

Belongs to the cytochrome b family. As to quaternary structure, the main subunits of complex b-c1 are: cytochrome b, cytochrome c1 and the Rieske protein. The cofactor is heme b.

The protein resides in the mitochondrion inner membrane. Its function is as follows. Component of the ubiquinol-cytochrome c reductase complex (complex III or cytochrome b-c1 complex) that is part of the mitochondrial respiratory chain. The b-c1 complex mediates electron transfer from ubiquinol to cytochrome c. Contributes to the generation of a proton gradient across the mitochondrial membrane that is then used for ATP synthesis. The polypeptide is Cytochrome b (mt:Cyt-b) (Drosophila mauritiana (Fruit fly)).